Consider the following 138-residue polypeptide: Cysteine desulfuration protein SufE (138 aa).

C51 acts as the Cysteine persulfide intermediate in catalysis.

The protein belongs to the SufE family. In terms of assembly, homodimer. Interacts with SufS.

The protein localises to the cytoplasm. It functions in the pathway cofactor biosynthesis; iron-sulfur cluster biosynthesis. In terms of biological role, participates in cysteine desulfuration mediated by SufS. Cysteine desulfuration mobilizes sulfur from L-cysteine to yield L-alanine and constitutes an essential step in sulfur metabolism for biosynthesis of a variety of sulfur-containing biomolecules. Functions as a sulfur acceptor for SufS, by mediating the direct transfer of the sulfur atom from the S-sulfanylcysteine of SufS, an intermediate product of cysteine desulfuration process. This is Cysteine desulfuration protein SufE from Citrobacter koseri (strain ATCC BAA-895 / CDC 4225-83 / SGSC4696).